A 133-amino-acid chain; its full sequence is MATNFLVGEKIWFHKFKYGDAERRFYEQMNGPVAGASLQEASMILHDIARARENIPKSLAGSLGPGASSGPSGDHSELVVRIASLEVDNQRDLAERAGEELARPLGHSPADPAHVSHAPSGAPGQEASHTSRG.

Low complexity predominate over residues 58 to 73; sequence SLAGSLGPGASSGPSG. 2 disordered regions span residues 58 to 77 and 89 to 133; these read SLAG…DHSE and NQRD…TSRG. The segment covering 89 to 102 has biased composition (basic and acidic residues); sequence NQRDLAERAGEELA.

Belongs to the EF-1-beta/EF-1-delta family.

This chain is Putative elongation factor 1-delta-like protein (EEF1DP3), found in Homo sapiens (Human).